A 195-amino-acid chain; its full sequence is Imidazoleglycerol-phosphate dehydratase (195 aa).

The protein belongs to the imidazoleglycerol-phosphate dehydratase family.

The protein resides in the cytoplasm. The catalysed reaction is D-erythro-1-(imidazol-4-yl)glycerol 3-phosphate = 3-(imidazol-4-yl)-2-oxopropyl phosphate + H2O. It participates in amino-acid biosynthesis; L-histidine biosynthesis; L-histidine from 5-phospho-alpha-D-ribose 1-diphosphate: step 6/9. This Burkholderia mallei (strain NCTC 10247) protein is Imidazoleglycerol-phosphate dehydratase.